The primary structure comprises 180 residues: Probable nicotinate-nucleotide adenylyltransferase (180 aa).

This sequence belongs to the NadD family.

It carries out the reaction nicotinate beta-D-ribonucleotide + ATP + H(+) = deamido-NAD(+) + diphosphate. The protein operates within cofactor biosynthesis; NAD(+) biosynthesis; deamido-NAD(+) from nicotinate D-ribonucleotide: step 1/1. Functionally, catalyzes the reversible adenylation of nicotinate mononucleotide (NaMN) to nicotinic acid adenine dinucleotide (NaAD). In Pelagibacter ubique (strain HTCC1062), this protein is Probable nicotinate-nucleotide adenylyltransferase.